A 1148-amino-acid chain; its full sequence is MPEQYRYTLPVKAGEQRLLGELTGAACATLVAEIAERHAGPVVLIAPDMQNALRLHDEISQFTDQMVMNLADWETLPYDSFSPHQDIISSRLSTLYQLPTMQRGVLIVPVNTLMQRVCPHSFLHGHALVMKKGQRLSRDALRTQLDSAGYRHVDQVMEHGEYATRGALLDLFPMGSELPYRLDFFDDEIDSLRVFDVDSQRTLEEVEAINLLPAHEFPTDKAAIELFRSQWRDTFEVKRDPEHIYQQVSKGTLPAGIEYWQPLFFSEPLPPLFSYFPANTLLVNTGDLETSAERFQADTLARFENRGVDPMRPLLPPQSLWLRVDELFSELKNWPRVQLKTEHLPTKAANANLGFQKLPDLAVQAQQKAPLDALRKFLETFDGPVVFSVESEGRREALGELLARIKIAPQRIMRLDEASDRGRYLMIGAAEHGFVDTVRNLALICESDLLGERVARRRQDSRRTINPDTLIRNLAELHIGQPVVHLEHGVGRYAGMTTLEAGGITGEYLMLTYANDAKLYVPVSSLHLISRYAGGAEENAPLHKLGGDAWSRARQKAAEKVRDVAAELLDIYAQRAAKEGFAFKHDREQYQLFCDSFPFETTPDQAQAINAVLSDMCQPLAMDRLVCGDVGFGKTEVAMRAAFLAVDNHKQVAVLVPTTLLAQQHYDNFRDRFANWPVRIEMISRFRSAKEQTQILAEVAEGKIDILIGTHKLLQSDVKFKDLGLLIVDEEHRFGVRHKERIKAMRANVDILTLTATPIPRTLNMAMSGMRDLSIIATPPARRLAVKTFVREYDSMVVREAILREILRGGQVYYLYNDVENIQKAAERLAELVPEARIAIGHGQMRERELERVMNDFHHQRFNVLVCTTIIETGIDIPTANTIIIERADHFGLAQLHQLRGRVGRSHHQAYAWLLTPHPKAMTTDAQKRLEAIASLEDLGAGFALATHDLEIRGAGELLGEEQSGSMETIGFSLYMELLENAVDALKAGREPSLEDLTSQQTEVELRMPSLLPDDFIPDVNTRLSFYKRIASAKTENELEEIKVELIDRFGLLPDPARTLLDIARLRQQAQKLGIRKLEGNEKGGVIEFAEKNHVNPAWLIGLLQKQPQHYRLDGPTRLKFIQDLSERKTRIEWVRQFMRELEENAIA.

The 162-residue stretch at 615–776 (DMCQPLAMDR…MSGMRDLSII (162 aa)) folds into the Helicase ATP-binding domain. ATP is bound at residue 628–635 (GDVGFGKT). The DEEH box signature appears at 729 to 732 (DEEH). In terms of domain architecture, Helicase C-terminal spans 798–951 (VREAILREIL…GFALATHDLE (154 aa)).

It in the N-terminal section; belongs to the UvrB family. This sequence in the C-terminal section; belongs to the helicase family. RecG subfamily. In terms of assembly, monomer. Interacts with UvrA and RNAP.

The protein localises to the cytoplasm. In terms of biological role, couples transcription and DNA repair by recognizing RNA polymerase (RNAP) stalled at DNA lesions. Mediates ATP-dependent release of RNAP and its truncated transcript from the DNA, and recruitment of nucleotide excision repair machinery to the damaged site. Can also dissociate RNAP that is blocked by low concentration of nucleoside triphosphates or by physical obstruction, such as bound proteins. In addition, can rescue arrested complexes by promoting forward translocation. Has ATPase activity, which is required for removal of stalled RNAP, but seems to lack helicase activity. May act through a translocase activity that rewinds upstream DNA, leading either to translocation or to release of RNAP when the enzyme active site cannot continue elongation. This chain is Transcription-repair-coupling factor, found in Escherichia coli (strain K12).